The primary structure comprises 362 residues: Phosphoserine aminotransferase (362 aa).

Arg41 provides a ligand contact to L-glutamate. Pyridoxal 5'-phosphate-binding positions include 75-76 (GS), Phe101, Thr152, Asp173, and Gln196. Lys197 is subject to N6-(pyridoxal phosphate)lysine. 239 to 240 (NT) lines the pyridoxal 5'-phosphate pocket.

Belongs to the class-V pyridoxal-phosphate-dependent aminotransferase family. SerC subfamily. As to quaternary structure, homodimer. Pyridoxal 5'-phosphate serves as cofactor.

It localises to the cytoplasm. The catalysed reaction is O-phospho-L-serine + 2-oxoglutarate = 3-phosphooxypyruvate + L-glutamate. It carries out the reaction 4-(phosphooxy)-L-threonine + 2-oxoglutarate = (R)-3-hydroxy-2-oxo-4-phosphooxybutanoate + L-glutamate. The protein operates within amino-acid biosynthesis; L-serine biosynthesis; L-serine from 3-phospho-D-glycerate: step 2/3. Its function is as follows. Catalyzes the reversible conversion of 3-phosphohydroxypyruvate to phosphoserine and of 3-hydroxy-2-oxo-4-phosphonooxybutanoate to phosphohydroxythreonine. The polypeptide is Phosphoserine aminotransferase (Leuconostoc mesenteroides subsp. mesenteroides (strain ATCC 8293 / DSM 20343 / BCRC 11652 / CCM 1803 / JCM 6124 / NCDO 523 / NBRC 100496 / NCIMB 8023 / NCTC 12954 / NRRL B-1118 / 37Y)).